Consider the following 130-residue polypeptide: ATP synthase epsilon chain (130 aa).

Belongs to the ATPase epsilon chain family. F-type ATPases have 2 components, CF(1) - the catalytic core - and CF(0) - the membrane proton channel. CF(1) has five subunits: alpha(3), beta(3), gamma(1), delta(1), epsilon(1). CF(0) has three main subunits: a, b and c.

It localises to the cell inner membrane. In terms of biological role, produces ATP from ADP in the presence of a proton gradient across the membrane. This is ATP synthase epsilon chain from Sulfurimonas denitrificans (strain ATCC 33889 / DSM 1251) (Thiomicrospira denitrificans (strain ATCC 33889 / DSM 1251)).